The chain runs to 202 residues: Holliday junction resolvase RecU (202 aa).

Mg(2+) contacts are provided by Thr-85, Asp-87, Glu-100, and Gln-119.

The protein belongs to the RecU family. It depends on Mg(2+) as a cofactor.

The protein resides in the cytoplasm. It catalyses the reaction Endonucleolytic cleavage at a junction such as a reciprocal single-stranded crossover between two homologous DNA duplexes (Holliday junction).. In terms of biological role, endonuclease that resolves Holliday junction intermediates in genetic recombination. Cleaves mobile four-strand junctions by introducing symmetrical nicks in paired strands. Promotes annealing of linear ssDNA with homologous dsDNA. Required for DNA repair, homologous recombination and chromosome segregation. The sequence is that of Holliday junction resolvase RecU from Streptococcus pyogenes serotype M5 (strain Manfredo).